A 492-amino-acid chain; its full sequence is N-succinylglutamate 5-semialdehyde dehydrogenase (492 aa).

NAD(+) is bound at residue 220-225 (GSASTG). Active-site residues include Glu243 and Cys277.

This sequence belongs to the aldehyde dehydrogenase family. AstD subfamily.

It carries out the reaction N-succinyl-L-glutamate 5-semialdehyde + NAD(+) + H2O = N-succinyl-L-glutamate + NADH + 2 H(+). The protein operates within amino-acid degradation; L-arginine degradation via AST pathway; L-glutamate and succinate from L-arginine: step 4/5. Functionally, catalyzes the NAD-dependent reduction of succinylglutamate semialdehyde into succinylglutamate. The polypeptide is N-succinylglutamate 5-semialdehyde dehydrogenase (Salmonella paratyphi B (strain ATCC BAA-1250 / SPB7)).